A 582-amino-acid polypeptide reads, in one-letter code: MSESWQQPPQTQPQQPQPPQPQHHAEPPPALAEHTLPPGTAENPLGCAVYGILLQPDPGLQPPQHAPLQAAGEPGPKCGVCGHDLAHLSSPHEHQCLAGHDRSFQCTQCLKIFHQATDLLEHQCVQAEQKPFVCGVCKMGFSLLTSLAQHHSSHSGLVKCSICEKTYKPAEAAEPATTAAPSLPAAPAPSTVTPAEQADKPYSCPICQKPFKHLSELSRHERIHTGEKPYKCTLCDKSFSQSSHLVHHKRTHSSERPYKCAVCEKTFKHRSHLVRHMYAHSGEHHLFRCNVCELHFKESSELLQHPCTPSGERPFRCGECQKAFKRPSDLRQHERTHSAERPFKCDLCPMGFKQQYALMRHRRTHKTEEPFKCGLCEKGFGQPSHLLYHQHVHTLETLFKCPVCQKGFDQSAELLRHKCLPGAAERPFKCPVCNKAYKRASALQKHQLAHCAAAEKPLRCTLCERRFFSSSEFVQHRCDPAREKPLKCPDCEKRFKYASDLQRHRRVHTGEKPYKCPNCDKAFKQREHLNKHQGVHAREQQFKCVWCGERFLDVALLQEHSAQHSAAAAAAEGAYQVAACLP.

Residues 1–14 are compositionally biased toward low complexity; it reads MSESWQQPPQTQPQ. Positions 1-39 are disordered; sequence MSESWQQPPQTQPQQPQPPQPQHHAEPPPALAEHTLPPG. A C2H2-type 1 zinc finger spans residues 76-100; that stretch reads PKCGVCGHDLAHLSSPHEHQCLAGH. Residues 104–126 form a C2H2-type 2; degenerate zinc finger; that stretch reads FQCTQCLKIFHQATDLLEHQCVQ. Lys-130 participates in a covalent cross-link: Glycyl lysine isopeptide (Lys-Gly) (interchain with G-Cter in SUMO2). A C2H2-type 3 zinc finger spans residues 132-154; that stretch reads FVCGVCKMGFSLLTSLAQHHSSH. A compositionally biased stretch (low complexity) spans 174-196; it reads EPATTAAPSLPAAPAPSTVTPAE. The segment at 174-198 is disordered; that stretch reads EPATTAAPSLPAAPAPSTVTPAEQA. C2H2-type zinc fingers lie at residues 202 to 224, 230 to 252, and 258 to 280; these read YSCP…ERIH, YKCT…KRTH, and YKCA…MYAH. Ser-281 is modified (phosphoserine). The C2H2-type 7; degenerate zinc-finger motif lies at 287–309; it reads FRCNVCELHFKESSELLQHPCTP. 3 C2H2-type zinc fingers span residues 315–337, 343–365, and 371–393; these read FRCG…ERTH, FKCD…RRTH, and FKCG…QHVH. A C2H2-type 11; degenerate zinc finger spans residues 399–421; that stretch reads FKCPVCQKGFDQSAELLRHKCLP. The C2H2-type 12 zinc finger occupies 428-450; that stretch reads FKCPVCNKAYKRASALQKHQLAH. The C2H2-type 13; degenerate zinc finger occupies 458–480; sequence LRCTLCERRFFSSSEFVQHRCDP. 3 C2H2-type zinc fingers span residues 486–508, 514–536, and 542–564; these read LKCP…RRVH, YKCP…QGVH, and FKCV…SAQH.

Belongs to the krueppel C2H2-type zinc-finger protein family.

The protein localises to the nucleus. In terms of biological role, may be involved in transcriptional regulation. This Homo sapiens (Human) protein is Zinc finger protein 319 (ZNF319).